We begin with the raw amino-acid sequence, 236 residues long: UPF0257 lipoprotein YnfC (236 aa).

The signal sequence occupies residues Met1–Gly16. Residue Cys17 is the site of N-palmitoyl cysteine attachment. Cys17 is lipidated: S-diacylglycerol cysteine.

It belongs to the UPF0257 family.

The protein localises to the cell membrane. In Salmonella schwarzengrund (strain CVM19633), this protein is UPF0257 lipoprotein YnfC.